A 207-amino-acid chain; its full sequence is Large ribosomal subunit protein uL4 (207 aa).

Polar residues predominate over residues 43–52 (NKRQGTQSAK). The disordered stretch occupies residues 43–72 (NKRQGTQSAKTRAEVRGGGRKPWKQKGTGR). Residues 60–71 (GGRKPWKQKGTG) are compositionally biased toward basic residues.

It belongs to the universal ribosomal protein uL4 family. As to quaternary structure, part of the 50S ribosomal subunit.

Its function is as follows. One of the primary rRNA binding proteins, this protein initially binds near the 5'-end of the 23S rRNA. It is important during the early stages of 50S assembly. It makes multiple contacts with different domains of the 23S rRNA in the assembled 50S subunit and ribosome. Functionally, forms part of the polypeptide exit tunnel. The chain is Large ribosomal subunit protein uL4 from Alkaliphilus metalliredigens (strain QYMF).